The sequence spans 292 residues: Acetylglutamate kinase (292 aa).

Substrate-binding positions include 64–65 (GG), R86, and N190.

Belongs to the acetylglutamate kinase family. ArgB subfamily.

It is found in the cytoplasm. It carries out the reaction N-acetyl-L-glutamate + ATP = N-acetyl-L-glutamyl 5-phosphate + ADP. The protein operates within amino-acid biosynthesis; L-arginine biosynthesis; N(2)-acetyl-L-ornithine from L-glutamate: step 2/4. Catalyzes the ATP-dependent phosphorylation of N-acetyl-L-glutamate. In Leptospira biflexa serovar Patoc (strain Patoc 1 / Ames), this protein is Acetylglutamate kinase.